We begin with the raw amino-acid sequence, 38 residues long: DDRRSPLEECFQQNDYEEFLEIAKNGLKKTXNPKHVXV.

It belongs to the flavin monoamine oxidase family. FIG1 subfamily. Homodimer; non-covalently linked. FAD serves as cofactor. In terms of processing, N-glycosylated. Expressed by the venom gland.

Its subcellular location is the secreted. The catalysed reaction is an L-alpha-amino acid + O2 + H2O = a 2-oxocarboxylate + H2O2 + NH4(+). The enzyme catalyses L-leucine + O2 + H2O = 4-methyl-2-oxopentanoate + H2O2 + NH4(+). It carries out the reaction L-phenylalanine + O2 + H2O = 3-phenylpyruvate + H2O2 + NH4(+). It catalyses the reaction L-tryptophan + O2 + H2O = indole-3-pyruvate + H2O2 + NH4(+). The catalysed reaction is L-methionine + O2 + H2O = 4-methylsulfanyl-2-oxobutanoate + H2O2 + NH4(+). The enzyme catalyses L-arginine + O2 + H2O = 5-guanidino-2-oxopentanoate + H2O2 + NH4(+). It carries out the reaction L-2-aminohexanoate + O2 + H2O = 2-oxohexanoate + H2O2 + NH4(+). It catalyses the reaction L-2-aminopentanoate + O2 + H2O = 2-oxopentanoate + H2O2 + NH4(+). The catalysed reaction is L-tyrosine + O2 + H2O = 3-(4-hydroxyphenyl)pyruvate + H2O2 + NH4(+). Its function is as follows. Catalyzes an oxidative deamination of predominantly hydrophobic and aromatic L-amino acids, thus producing hydrogen peroxide that may contribute to the diverse toxic effects of this enzyme. Is very active against L-Phe and L-Tyr, moderately active against L-Trp, L-Met, L-Leu, L-norleucine (L-2-aminohexanoate), L-Arg and L-norvaline (L-2-aminopentanoate), and slightly active against L-His, L-cystine, and L-Ile. L-Gln, L-Lys, L-Asn, L-ornithine, L-Ala and L-Val are oxidized very slowly. Exhibits diverse biological activities, such as hemorrhage, hemolysis, edema, apoptosis of vascular endothelial cells or tumor cell lines, antibacterial and antiparasitic activities. This protein inhibits both agonist- and shear stress-induced platelet aggregation (SIPA). Effects of snake L-amino oxidases on platelets are controversial, since they either induce aggregation or inhibit agonist-induced aggregation. These different effects are probably due to different experimental conditions. The polypeptide is L-amino-acid oxidase (Naja kaouthia (Monocled cobra)).